Here is a 432-residue protein sequence, read N- to C-terminus: GTPase Obg (432 aa).

Residues 1–158 (MFVDQVKIYV…RNIILELKLL (158 aa)) enclose the Obg domain. The OBG-type G domain maps to 159-329 (ADVGLVGFPS…LLFAIADLLE (171 aa)). Residues 165-172 (GFPSVGKS), 190-194 (FTTLV), 212-215 (DLPG), 282-285 (NKMD), and 310-312 (SAA) each bind GTP. Mg(2+)-binding residues include Ser-172 and Thr-192. Residues 350–428 (KYEKEEPPFT…LLDYEFEFVD (79 aa)) enclose the OCT domain.

This sequence belongs to the TRAFAC class OBG-HflX-like GTPase superfamily. OBG GTPase family. Monomer. Mg(2+) serves as cofactor.

It is found in the cytoplasm. An essential GTPase which binds GTP, GDP and possibly (p)ppGpp with moderate affinity, with high nucleotide exchange rates and a fairly low GTP hydrolysis rate. Plays a role in control of the cell cycle, stress response, ribosome biogenesis and in those bacteria that undergo differentiation, in morphogenesis control. The polypeptide is GTPase Obg (Geobacillus kaustophilus (strain HTA426)).